Consider the following 100-residue polypeptide: Urease subunit gamma (100 aa).

The protein belongs to the urease gamma subunit family. As to quaternary structure, heterotrimer of UreA (gamma), UreB (beta) and UreC (alpha) subunits. Three heterotrimers associate to form the active enzyme.

It is found in the cytoplasm. The catalysed reaction is urea + 2 H2O + H(+) = hydrogencarbonate + 2 NH4(+). The protein operates within nitrogen metabolism; urea degradation; CO(2) and NH(3) from urea (urease route): step 1/1. This Alkalilimnicola ehrlichii (strain ATCC BAA-1101 / DSM 17681 / MLHE-1) protein is Urease subunit gamma.